A 342-amino-acid polypeptide reads, in one-letter code: tRNA-specific 2-thiouridylase MnmA (342 aa).

Residues 6–13 (LLSGGVDS) and Leu32 each bind ATP. The active-site Nucleophile is Cys92. Cys92 and Cys191 form a disulfide bridge. Residue Gly116 participates in ATP binding. Residues 138-140 (KDQ) form an interaction with tRNA region. Cys191 functions as the Cysteine persulfide intermediate in the catalytic mechanism. The segment at 293–294 (RY) is interaction with tRNA.

Belongs to the MnmA/TRMU family.

It localises to the cytoplasm. It catalyses the reaction S-sulfanyl-L-cysteinyl-[protein] + uridine(34) in tRNA + AH2 + ATP = 2-thiouridine(34) in tRNA + L-cysteinyl-[protein] + A + AMP + diphosphate + H(+). In terms of biological role, catalyzes the 2-thiolation of uridine at the wobble position (U34) of tRNA, leading to the formation of s(2)U34. In Helicobacter pylori (strain HPAG1), this protein is tRNA-specific 2-thiouridylase MnmA.